The sequence spans 267 residues: 5'-methylthioadenosine nucleosidase (267 aa).

Catalysis depends on E38, which acts as the Proton acceptor. Residues T116, 199–202, and D225 contribute to the S-methyl-5'-thioadenosine site; that span reads KDME. Residues K199 and D225 each contribute to the adenine site. The active-site Proton donor is the D225.

It belongs to the PNP/UDP phosphorylase family. MtnN subfamily. As to quaternary structure, homodimer. Interacts with CBL3 in a calcium-dependent manner. Expressed in roots, leaves, stems, cauline leaves and flowers.

It carries out the reaction S-methyl-5'-thioadenosine + H2O = 5-(methylsulfanyl)-D-ribose + adenine. It functions in the pathway amino-acid biosynthesis; L-methionine biosynthesis via salvage pathway; S-methyl-5-thio-alpha-D-ribose 1-phosphate from S-methyl-5'-thioadenosine (hydrolase route): step 1/2. Inhibited by CBL3 in a calcium-dependent manner. Inhibited by 5'-methylthiotubercidin (MTT) and by formycin A (FMA). Enzyme of the methionine cycle that catalyzes the irreversible cleavage of the glycosidic bond in 5'-methylthioadenosine (MTA) to adenine and 5'-methylthioribose. Contributes to the maintenance of AdoMet homeostasis and is required to sustain high rates of ethylene synthesis. Inactive towards S-adenosylhomocysteine (SAH/AdoHcy). This is 5'-methylthioadenosine nucleosidase (MTN1) from Arabidopsis thaliana (Mouse-ear cress).